The following is a 244-amino-acid chain: Small ribosomal subunit protein eS4 (244 aa).

Residues 1–14 (MANKGPRKHLKRLP) are compositionally biased toward basic residues. The segment at 1 to 36 (MANKGPRKHLKRLPAPKNWQISRKTNKYTTRPSAGP) is disordered. The segment covering 19-32 (WQISRKTNKYTTRP) has biased composition (polar residues). The 64-residue stretch at 43–106 (LPLLLVLRDL…NESFLVVLDE (64 aa)) folds into the S4 RNA-binding domain.

The protein belongs to the eukaryotic ribosomal protein eS4 family.

The chain is Small ribosomal subunit protein eS4 from Methanococcus aeolicus (strain ATCC BAA-1280 / DSM 17508 / OCM 812 / Nankai-3).